A 156-amino-acid polypeptide reads, in one-letter code: 6,7-dimethyl-8-ribityllumazine synthase (156 aa).

5-amino-6-(D-ribitylamino)uracil contacts are provided by residues Phe-23, 57–59 (AYE), and 81–83 (AVI). 86–87 (ST) provides a ligand contact to (2S)-2-hydroxy-3-oxobutyl phosphate. His-89 serves as the catalytic Proton donor. Position 114 (Phe-114) interacts with 5-amino-6-(D-ribitylamino)uracil. Position 128 (Arg-128) interacts with (2S)-2-hydroxy-3-oxobutyl phosphate.

The protein belongs to the DMRL synthase family.

The catalysed reaction is (2S)-2-hydroxy-3-oxobutyl phosphate + 5-amino-6-(D-ribitylamino)uracil = 6,7-dimethyl-8-(1-D-ribityl)lumazine + phosphate + 2 H2O + H(+). It functions in the pathway cofactor biosynthesis; riboflavin biosynthesis; riboflavin from 2-hydroxy-3-oxobutyl phosphate and 5-amino-6-(D-ribitylamino)uracil: step 1/2. In terms of biological role, catalyzes the formation of 6,7-dimethyl-8-ribityllumazine by condensation of 5-amino-6-(D-ribitylamino)uracil with 3,4-dihydroxy-2-butanone 4-phosphate. This is the penultimate step in the biosynthesis of riboflavin. In Helicobacter hepaticus (strain ATCC 51449 / 3B1), this protein is 6,7-dimethyl-8-ribityllumazine synthase.